A 242-amino-acid chain; its full sequence is Basic agglutinin (242 aa).

2 N-linked (GlcNAc...) asparagine glycosylation sites follow: Asn45 and Asn220.

Belongs to the leguminous lectin family.

Functionally, lectin. This chain is Basic agglutinin (WBAI), found in Psophocarpus tetragonolobus (Winged bean).